The sequence spans 659 residues: DNA ligase (659 aa).

NAD(+)-binding positions include 32-36, 81-82, and glutamate 110; these read DQQYD and SL. The active-site N6-AMP-lysine intermediate is the lysine 112. NAD(+) contacts are provided by arginine 133, glutamate 167, lysine 282, and lysine 306. The Zn(2+) site is built by cysteine 399, cysteine 402, cysteine 415, and cysteine 420. Positions 582-659 constitute a BRCT domain; the sequence is IKNNIFKNKK…QEHEFEELIK (78 aa).

The protein belongs to the NAD-dependent DNA ligase family. LigA subfamily. The cofactor is Mg(2+). It depends on Mn(2+) as a cofactor.

It catalyses the reaction NAD(+) + (deoxyribonucleotide)n-3'-hydroxyl + 5'-phospho-(deoxyribonucleotide)m = (deoxyribonucleotide)n+m + AMP + beta-nicotinamide D-nucleotide.. Functionally, DNA ligase that catalyzes the formation of phosphodiester linkages between 5'-phosphoryl and 3'-hydroxyl groups in double-stranded DNA using NAD as a coenzyme and as the energy source for the reaction. It is essential for DNA replication and repair of damaged DNA. This is DNA ligase from Phytoplasma mali (strain AT).